Consider the following 271-residue polypeptide: Mannosyl-3-phosphoglycerate phosphatase (271 aa).

D13 serves as the catalytic Nucleophile. Mg(2+) contacts are provided by D13, D15, and D214.

It belongs to the HAD-like hydrolase superfamily. MPGP family. It depends on Mg(2+) as a cofactor.

It localises to the cytoplasm. The enzyme catalyses 2-O-(alpha-D-mannosyl)-3-phosphoglycerate + H2O = (2R)-2-O-(alpha-D-mannosyl)-glycerate + phosphate. This Escherichia coli (strain K12 / DH10B) protein is Mannosyl-3-phosphoglycerate phosphatase.